Consider the following 138-residue polypeptide: Large ribosomal subunit protein uL16 (138 aa).

Basic residues predominate over residues 1 to 19; the sequence is MLIPRKVKHRKQHHPKKKG. Positions 1–24 are disordered; sequence MLIPRKVKHRKQHHPKKKGTASGG.

Belongs to the universal ribosomal protein uL16 family. As to quaternary structure, part of the 50S ribosomal subunit.

Its function is as follows. Binds 23S rRNA and is also seen to make contacts with the A and possibly P site tRNAs. The polypeptide is Large ribosomal subunit protein uL16 (Mycobacteroides abscessus (strain ATCC 19977 / DSM 44196 / CCUG 20993 / CIP 104536 / JCM 13569 / NCTC 13031 / TMC 1543 / L948) (Mycobacterium abscessus)).